The sequence spans 197 residues: Xanthine phosphoribosyltransferase (197 aa).

Leu-20 and Asn-27 together coordinate xanthine. 128-132 (ANGQA) is a 5-phospho-alpha-D-ribose 1-diphosphate binding site. Xanthine is bound at residue Lys-156.

It belongs to the purine/pyrimidine phosphoribosyltransferase family. Xpt subfamily. In terms of assembly, homodimer.

The protein resides in the cytoplasm. It catalyses the reaction XMP + diphosphate = xanthine + 5-phospho-alpha-D-ribose 1-diphosphate. Its pathway is purine metabolism; XMP biosynthesis via salvage pathway; XMP from xanthine: step 1/1. In terms of biological role, converts the preformed base xanthine, a product of nucleic acid breakdown, to xanthosine 5'-monophosphate (XMP), so it can be reused for RNA or DNA synthesis. The polypeptide is Xanthine phosphoribosyltransferase (Bacillus mycoides (strain KBAB4) (Bacillus weihenstephanensis)).